The sequence spans 274 residues: Large ribosomal subunit protein uL2 (274 aa).

The interval 221–254 (RGTAMNPADHPHGGGEGRTFGKHPVSPWGLPTKG) is disordered.

Belongs to the universal ribosomal protein uL2 family. In terms of assembly, part of the 50S ribosomal subunit. Forms a bridge to the 30S subunit in the 70S ribosome.

In terms of biological role, one of the primary rRNA binding proteins. Required for association of the 30S and 50S subunits to form the 70S ribosome, for tRNA binding and peptide bond formation. It has been suggested to have peptidyltransferase activity; this is somewhat controversial. Makes several contacts with the 16S rRNA in the 70S ribosome. The sequence is that of Large ribosomal subunit protein uL2 from Sulfurihydrogenibium sp. (strain YO3AOP1).